A 213-amino-acid chain; its full sequence is MSSDVTLAQPGRDAFLASSLEVAPRLLGAVLRHESAEGPVALRITEVEAYTGEGLDPGSHAFRGPTRRNAAMYGEPGRLYAYFTYGMHVCANVVCSPAGEASAVLLRGAEIVEGLALAERRRAGASGRRIPQRDLARGPARLVVAAGIGLADDGADLLAPPFGLLLPSVQPEYATGPRTGVSGAGGGAAFPWRYWLPGEPSVSPYKRHPASHG.

The protein belongs to the DNA glycosylase MPG family.

In Leifsonia xyli subsp. xyli (strain CTCB07), this protein is Putative 3-methyladenine DNA glycosylase.